The following is a 211-amino-acid chain: Protein-L-isoaspartate O-methyltransferase (211 aa).

Residue Ser-60 is part of the active site.

It belongs to the methyltransferase superfamily. L-isoaspartyl/D-aspartyl protein methyltransferase family.

Its subcellular location is the cytoplasm. It carries out the reaction [protein]-L-isoaspartate + S-adenosyl-L-methionine = [protein]-L-isoaspartate alpha-methyl ester + S-adenosyl-L-homocysteine. Its function is as follows. Catalyzes the methyl esterification of L-isoaspartyl residues in peptides and proteins that result from spontaneous decomposition of normal L-aspartyl and L-asparaginyl residues. It plays a role in the repair and/or degradation of damaged proteins. The sequence is that of Protein-L-isoaspartate O-methyltransferase from Pseudomonas syringae pv. syringae (strain B728a).